The primary structure comprises 475 residues: Ammonium transporter Rh type C (475 aa).

The Cytoplasmic portion of the chain corresponds to 1–20; that stretch reads MGCVQSFRNFCDRPKNTNVR. The helical transmembrane segment at 21–41 threads the bilayer; the sequence is ISLPAVCFVWQIAMIILFGVF. At 42–73 the chain is on the extracellular side; it reads IRYNEEADTHWVEYRKKENISSDIENDFYFRY. Residue N60 is glycosylated (N-linked (GlcNAc...) asparagine). Residues 74 to 94 traverse the membrane as a helical segment; it reads PSFQDVHVMIFVGFGFLMTFL. The Cytoplasmic portion of the chain corresponds to 95–98; sequence KRYS. A helical membrane pass occupies residues 99-119; it reads FGAVGFNFLIAAFGLQWALLM. Over 120–138 the chain is Extracellular; that stretch reads QGWFHSLDYTDGKIKIGIE. The helical transmembrane segment at 139–159 threads the bilayer; the sequence is NLINADFCVAGCLIAYGAVLG. Residues 160–167 lie on the Cytoplasmic side of the membrane; the sequence is KVSPVQLM. The chain crosses the membrane as a helical span at residues 168–188; it reads VLTLFGITLFAVEEYIILNLI. Over 189 to 193 the chain is Extracellular; sequence HARDA. Residues 194 to 214 traverse the membrane as a helical segment; that stretch reads GGSMVIHTFGGYYGLSISWML. The Cytoplasmic portion of the chain corresponds to 215–233; sequence YRPNLEQSSNLQGSVYQSD. The chain crosses the membrane as a helical span at residues 234–254; that stretch reads VFAMIGTLFLWMFWPSFNSAI. At 255 to 265 the chain is on the extracellular side; the sequence is TDHGDGQHRAA. The helical transmembrane segment at 266–286 threads the bilayer; the sequence is INTYLALASTVLTTVAISSLF. Topologically, residues 287 to 299 are cytoplasmic; that stretch reads QKHGKLDMVHIQN. A helical membrane pass occupies residues 300 to 320; sequence STLAGGVAVGTAAEFMLMPYG. A topological domain (extracellular) is located at residue S321. A helical membrane pass occupies residues 322-342; it reads LIVGFCCGIISTLGYIYLTPF. Residues 343–357 lie on the Cytoplasmic side of the membrane; that stretch reads MEKYLKIQDTCGIHN. Residues 358–378 traverse the membrane as a helical segment; that stretch reads LHAMPGLIGGIVGAITAAAAT. Residues 379-410 lie on the Extracellular side of the membrane; that stretch reads ESVYGKEGLVNTFDFVGPFKNMVPTTQGGHQA. A helical transmembrane segment spans residues 411–431; the sequence is AGLCVAICFGIGGGIMVGCIL. The Cytoplasmic portion of the chain corresponds to 432 to 475; it reads RLPIWCDPADDNCFNDEPYWELPEEEEIIPPILHYNNHMVNKDV.

This sequence belongs to the ammonium transporter (TC 2.A.49) family. Rh subfamily. As to quaternary structure, homotrimer.

The protein resides in the apical cell membrane. Its function is as follows. Functions as an ammonia transporter. May play a role in the elimination of ammonia in the gill. This Tetraodon nigroviridis (Spotted green pufferfish) protein is Ammonium transporter Rh type C (rhcg).